The sequence spans 305 residues: Acetaldehyde dehydrogenase (305 aa).

12-15 (SGNI) contributes to the NAD(+) binding site. Residue C127 is the Acyl-thioester intermediate of the active site. NAD(+) is bound by residues 158–166 (SAGPGTRAN) and N277.

The protein belongs to the acetaldehyde dehydrogenase family.

It carries out the reaction acetaldehyde + NAD(+) + CoA = acetyl-CoA + NADH + H(+). In Mycolicibacterium paratuberculosis (strain ATCC BAA-968 / K-10) (Mycobacterium paratuberculosis), this protein is Acetaldehyde dehydrogenase.